Reading from the N-terminus, the 293-residue chain is Elongation factor Ts (293 aa).

The involved in Mg(2+) ion dislocation from EF-Tu stretch occupies residues 79-82 (TDFV).

This sequence belongs to the EF-Ts family.

The protein resides in the cytoplasm. In terms of biological role, associates with the EF-Tu.GDP complex and induces the exchange of GDP to GTP. It remains bound to the aminoacyl-tRNA.EF-Tu.GTP complex up to the GTP hydrolysis stage on the ribosome. This is Elongation factor Ts from Bacillus velezensis (strain DSM 23117 / BGSC 10A6 / LMG 26770 / FZB42) (Bacillus amyloliquefaciens subsp. plantarum).